Consider the following 900-residue polypeptide: Phospholipase DDHD1 (900 aa).

Disordered stretches follow at residues 1–28 (MNYP…ELGS), 100–152 (LRYY…GGPA), and 202–233 (GARP…DEDR). Phosphoserine occurs at positions 8 and 11. The span at 130–140 (SGGGGATGGSP) shows a compositional bias: gly residues. Residue S537 is part of the active site. The region spanning 611–886 (LKFKVENFFC…ALFLLTFMYK (276 aa)) is the DDHD domain. Disordered stretches follow at residues 706-725 (AKEP…PSPV) and 768-801 (SSTT…TQTL). A compositionally biased stretch (polar residues) spans 710 to 725 (TSVSENEGISTIPSPV). S723 carries the phosphoserine modification. Residues 776-787 (TSKDSMEDEKKP) are compositionally biased toward basic and acidic residues. Residues 791–801 (PSATTVGTQTL) show a composition bias toward polar residues.

Belongs to the PA-PLA1 family. Forms homooligomers and, to a much smaller extent, heterooligomers with DDHD2. As to expression, highly expressed in testis. Also expressed in brain, spleen and lung. Only expressed in cerebellum in fetal brain.

It localises to the cytoplasm. The catalysed reaction is a 1,2-diacyl-sn-glycero-3-phosphate + H2O = a 2-acyl-sn-glycerol 3-phosphate + a fatty acid + H(+). The enzyme catalyses a 1,2-diacyl-sn-glycero-3-phospho-(1D-myo-inositol) + H2O = a 2-acyl-sn-glycero-3-phospho-D-myo-inositol + a fatty acid + H(+). It catalyses the reaction 1-octadecanoyl-2-(5Z,8Z,11Z,14Z-eicosatetraenoyl)-sn-glycero-3-phospho-(1D-myo-inositol) + H2O = 2-(5Z,8Z,11Z,14Z-eicosatetraenoyl)-sn-glycero-3-phospho-(1D-myo-inositol) + octadecanoate + H(+). It carries out the reaction a 1-acyl-2-(5Z,8Z,11Z,14Z-eicosatetraenoyl)-sn-glycero-3-phospho-(1D-myo-inositol) + H2O = 2-(5Z,8Z,11Z,14Z-eicosatetraenoyl)-sn-glycero-3-phospho-(1D-myo-inositol) + a fatty acid + H(+). The catalysed reaction is 1,2-dihexadecanoyl-sn-glycero-3-phospho-(1D-myo-inositol) + H2O = 2-hexadecanoyl-sn-glycero-3-phospho-(1D-myo-inositol) + hexadecanoate + H(+). The enzyme catalyses a 1-acyl-2-(5Z,8Z,11Z,14Z)-eicosatetraenoyl-sn-glycero-3-phosphate + H2O = 2-(5Z,8Z,11Z,14Z-eicosatetraenoyl)-sn-glycero-3-phosphate + a fatty acid + H(+). It catalyses the reaction 1,2-di-(9Z-octadecenoyl)-sn-glycero-3-phosphate + H2O = 2-(9Z-octadecenoyl)-sn-glycero-3-phosphate + (9Z)-octadecenoate + H(+). It carries out the reaction 1-hexadecanoyl-2-(9Z-octadecenoyl)-sn-glycero-3-phosphate + H2O = 2-(9Z-octadecenoyl)-sn-glycero-3-phosphate + hexadecanoate + H(+). The catalysed reaction is 1-hexadecanoyl-2-(9Z-octadecenoyl)-sn-glycero-3-phospho-L-serine + H2O = 2-(9Z-octadecenoyl)-sn-glycero-3-phospho-L-serine + hexadecanoate + H(+). The enzyme catalyses 1,2-di-(5Z,8Z,11Z,14Z)-eicosatetraenoyl-sn-glycero-3-phosphate + H2O = 2-(5Z,8Z,11Z,14Z-eicosatetraenoyl)-sn-glycero-3-phosphate + (5Z,8Z,11Z,14Z)-eicosatetraenoate + H(+). It catalyses the reaction 1-octadecanoyl-2-(5Z,8Z,11Z,14Z-eicosatetraenoyl)-sn-glycero-3-phosphate + H2O = 2-(5Z,8Z,11Z,14Z-eicosatetraenoyl)-sn-glycero-3-phosphate + octadecanoate + H(+). It carries out the reaction a 1,2-diacyl-sn-glycero-3-phosphocholine + H2O = a 2-acyl-sn-glycero-3-phosphocholine + a fatty acid + H(+). The catalysed reaction is a 1,2-diacyl-sn-glycero-3-phosphoethanolamine + H2O = a 2-acyl-sn-glycero-3-phosphoethanolamine + a fatty acid + H(+). The enzyme catalyses a 1,2-diacyl-sn-glycero-3-phospho-L-serine + H2O = a 2-acyl-sn-glycero-3-phospho-L-serine + a fatty acid + H(+). It catalyses the reaction a 1,2-diacyl-sn-glycero-3-phospho-(1'-sn-glycerol) + H2O = 2-acyl-sn-glycero-3-phospho-(1'-sn-glycerol) + a fatty acid + H(+). It carries out the reaction 1-hexadecanoyl-2-(9Z-octadecenoyl)-sn-glycero-3-phospho-(1'-sn-glycerol) + H2O = 2-(9Z-octadecenoyl)-sn-glycero-3-phospho-(1'-sn-glycerol) + hexadecanoate + H(+). The catalysed reaction is 1-acyl-2-(5Z,8Z,11Z,14Z-eicosatetraenoyl)-sn-glycero-3-phosphocholine + H2O = 2-(5Z,8Z,11Z,14Z)-eicosatetraenoyl-sn-glycero-3-phosphocholine + a fatty acid + H(+). The enzyme catalyses 1-acyl-2-(5Z,8Z,11Z,14Z)-eicosatetraenoyl-sn-glycero-3-phosphoethanolamine + H2O = 2-(5Z,8Z,11Z,14Z)-eicosatetraenoyl-sn-glycero-3-phosphoethanolamine + a fatty acid + H(+). It catalyses the reaction 1-(9Z-octadecenoyl)-2-(7Z,10Z,13Z,16Z,19Z-docosapentaenoyl)-sn-glycero-3-phospho-1D-myo-inositol + H2O = 2-(7Z,10Z,13Z,16Z,19Z-docosapentaenoyl)-sn-glycero-3-phospho-1D-myo-inositol + (9Z)-octadecenoate + H(+). It carries out the reaction 1-(9Z-octadecenoyl)-2-(5Z,8Z,11Z,14Z-eicosatetraenoyl)-sn-glycero-3-phospho-1D-myo-inositol + H2O = 2-(5Z,8Z,11Z,14Z-eicosatetraenoyl)-sn-glycero-3-phospho-(1D-myo-inositol) + (9Z)-octadecenoate + H(+). The catalysed reaction is 1,2-di-(9Z-octadecenoyl)-sn-glycero-3-phospho-1D-myo-inositol + H2O = 2-(9Z-octadecenoyl)-sn-glycero-3-phospho-1D-myo-inositol + (9Z)-octadecenoate + H(+). The enzyme catalyses 1-(9Z-octadecenoyl)-2-(8Z,11Z,14Z-eicosatrienoyl)-sn-glycero-3-phospho-1D-myo-inositol + H2O = 2-(8Z,11Z,14Z-eicosatrienoyl)-sn-glycero-3-phospho-1D-myo-inositol + (9Z)-octadecenoate + H(+). It catalyses the reaction 1,2-di-(9Z-octadecenoyl)-sn-glycero-3-phosphocholine + H2O = (9Z-octadecenoyl)-sn-glycero-3-phosphocholine + (9Z)-octadecenoate + H(+). It participates in phospholipid metabolism; phosphatidylinositol metabolism. Phosphatidate (1,2-diacyl-sn-glycero-3-phosphate, PA) can positively regulate phospholipase A1 activity. Phospholipase A1 (PLA1) that hydrolyzes ester bonds at the sn-1 position of glycerophospholipids producing a free fatty acid and a lysophospholipid. Prefers phosphatidate (1,2-diacyl-sn-glycero-3-phosphate, PA) as substrate in vitro, but can efficiently hydrolyze phosphatidylinositol (1,2-diacyl-sn-glycero-3-phospho-(1D-myo-inositol), PI), as well as a range of other glycerophospholipid substrates such as phosphatidylcholine (1,2-diacyl-sn-glycero-3-phosphocholine, PC), phosphatidylethanolamine (1,2-diacyl-sn-glycero-3-phosphoethanolamine, PE), phosphatidylserine (1,2-diacyl-sn-glycero-3-phospho-L-serine, PS) and phosphatidylglycerol (1,2-diacyl-sn-glycero-3-phospho-(1'-sn-glycerol), PG). Involved in the regulation of the endogenous content of polyunsaturated PI and PS lipids in the nervous system. Changes in these lipids extend to downstream metabolic products like PI phosphates PIP and PIP2, which play fundamental roles in cell biology. Regulates mitochondrial morphology. These dynamic changes may be due to PA hydrolysis at the mitochondrial surface. May play a regulatory role in spermatogenesis or sperm function. The polypeptide is Phospholipase DDHD1 (Homo sapiens (Human)).